The chain runs to 318 residues: Glycine--tRNA ligase alpha subunit (318 aa).

Belongs to the class-II aminoacyl-tRNA synthetase family. In terms of assembly, tetramer of two alpha and two beta subunits.

It localises to the cytoplasm. The enzyme catalyses tRNA(Gly) + glycine + ATP = glycyl-tRNA(Gly) + AMP + diphosphate. This chain is Glycine--tRNA ligase alpha subunit, found in Saccharophagus degradans (strain 2-40 / ATCC 43961 / DSM 17024).